The chain runs to 210 residues: Ribonuclease HII (210 aa).

The 191-residue stretch at 18–208 (YPVAGIDEAG…VNDIISQTKL (191 aa)) folds into the RNase H type-2 domain. A divalent metal cation contacts are provided by Asp24, Glu25, and Asp116.

It belongs to the RNase HII family. The cofactor is Mn(2+). Mg(2+) serves as cofactor.

It localises to the cytoplasm. It catalyses the reaction Endonucleolytic cleavage to 5'-phosphomonoester.. In terms of biological role, endonuclease that specifically degrades the RNA of RNA-DNA hybrids. This is Ribonuclease HII from Endomicrobium trichonymphae.